The primary structure comprises 456 residues: Crinkler effector protein 2 (456 aa).

Residues 1–17 (MVKLVCAIVGVAGSAFP) form the signal peptide. Residues 18–54 (VDTDASQLVGDLKKAIKAENAMTFTGDAKDLQLFLAK) are LQLFLAK domain. A DWL domain region spans residues 55 to 136 (QPVDDESGKE…NMELPSSEQI (82 aa)). The HVLVXXP motif signature appears at 137–143 (HVLVVVP). The N-linked (GlcNAc...) asparagine glycan is linked to Asn-338.

Belongs to the Crinkler effector family.

It is found in the secreted. Its subcellular location is the host nucleus. Functionally, secreted effector that effector that induces cell death when expressed in host plants. Induces the expression of defense response genes in tomato. This chain is Crinkler effector protein 2, found in Phytophthora infestans (Potato late blight agent).